Reading from the N-terminus, the 106-residue chain is UPF0060 membrane protein Oant_2511 (106 aa).

4 helical membrane-spanning segments follow: residues Phe-3–Trp-23, Pro-30–Ile-50, Ala-60–Ala-80, and Arg-84–Pro-104.

It belongs to the UPF0060 family.

It localises to the cell inner membrane. The sequence is that of UPF0060 membrane protein Oant_2511 from Brucella anthropi (strain ATCC 49188 / DSM 6882 / CCUG 24695 / JCM 21032 / LMG 3331 / NBRC 15819 / NCTC 12168 / Alc 37) (Ochrobactrum anthropi).